A 603-amino-acid chain; its full sequence is Probable L-gulonolactone oxidase 6 (603 aa).

The N-terminal stretch at 1–35 (MAFTSSPSYGSLNAAFWRTIFVVHCISTLVFTTIS) is a signal peptide. The FAD-binding PCMH-type domain maps to 64-246 (STCRAANVAY…SQVTLKLQPM (183 aa)).

Belongs to the oxygen-dependent FAD-linked oxidoreductase family. FAD is required as a cofactor.

It catalyses the reaction L-gulono-1,4-lactone + O2 = L-ascorbate + H2O2 + H(+). It participates in cofactor biosynthesis; L-ascorbate biosynthesis. Functionally, may be involved in the biosynthesis of ascorbic acid. The polypeptide is Probable L-gulonolactone oxidase 6 (Arabidopsis thaliana (Mouse-ear cress)).